Consider the following 296-residue polypeptide: Ribosomal RNA small subunit methyltransferase H (296 aa).

Residues Gly-30–His-32, Asp-49, Phe-76, Asp-97, and Gln-104 each bind S-adenosyl-L-methionine.

Belongs to the methyltransferase superfamily. RsmH family.

It localises to the cytoplasm. It catalyses the reaction cytidine(1402) in 16S rRNA + S-adenosyl-L-methionine = N(4)-methylcytidine(1402) in 16S rRNA + S-adenosyl-L-homocysteine + H(+). Its function is as follows. Specifically methylates the N4 position of cytidine in position 1402 (C1402) of 16S rRNA. The protein is Ribosomal RNA small subunit methyltransferase H of Mesomycoplasma hyopneumoniae (strain 7448) (Mycoplasma hyopneumoniae).